The sequence spans 108 residues: Integration host factor subunit alpha (108 aa).

This sequence belongs to the bacterial histone-like protein family. As to quaternary structure, heterodimer of an alpha and a beta chain.

This protein is one of the two subunits of integration host factor, a specific DNA-binding protein that functions in genetic recombination as well as in transcriptional and translational control. This chain is Integration host factor subunit alpha, found in Methylorubrum extorquens (strain CM4 / NCIMB 13688) (Methylobacterium extorquens).